The sequence spans 402 residues: CinA-like protein (402 aa).

It belongs to the CinA family.

This Fusobacterium nucleatum subsp. nucleatum (strain ATCC 25586 / DSM 15643 / BCRC 10681 / CIP 101130 / JCM 8532 / KCTC 2640 / LMG 13131 / VPI 4355) protein is CinA-like protein.